The primary structure comprises 169 residues: Small ribosomal subunit protein uS5 (169 aa).

Residues 14 to 77 (LQEKLVAVRR…EQARKNMRKV (64 aa)) form the S5 DRBM domain.

The protein belongs to the universal ribosomal protein uS5 family. Part of the 30S ribosomal subunit. Contacts proteins S4 and S8.

With S4 and S12 plays an important role in translational accuracy. In terms of biological role, located at the back of the 30S subunit body where it stabilizes the conformation of the head with respect to the body. This chain is Small ribosomal subunit protein uS5, found in Methylococcus capsulatus (strain ATCC 33009 / NCIMB 11132 / Bath).